We begin with the raw amino-acid sequence, 162 residues long: Peptidyl-prolyl cis-trans isomerase (162 aa).

Positions 5–161 (FFDVQFGGDA…TTIKIVDSGV (157 aa)) constitute a PPIase cyclophilin-type domain.

It belongs to the cyclophilin-type PPIase family. PPIase A subfamily.

The enzyme catalyses [protein]-peptidylproline (omega=180) = [protein]-peptidylproline (omega=0). Its activity is regulated as follows. Binds cyclosporin A (CsA). CsA mediates some of its effects via an inhibitory action on PPIase. PPIases accelerate the folding of proteins. It catalyzes the cis-trans isomerization of proline imidic peptide bonds in oligopeptides. This chain is Peptidyl-prolyl cis-trans isomerase, found in Paramecium primaurelia.